Here is a 109-residue protein sequence, read N- to C-terminus: Nucleoid-associated protein Spro_1136 (109 aa).

Disordered regions lie at residues 1–21 (MFGK…QEKM) and 90–109 (EKMA…KMPF). The span at 11-21 (MKQAQQMQEKM) shows a compositional bias: low complexity.

It belongs to the YbaB/EbfC family. In terms of assembly, homodimer.

Its subcellular location is the cytoplasm. The protein resides in the nucleoid. Its function is as follows. Binds to DNA and alters its conformation. May be involved in regulation of gene expression, nucleoid organization and DNA protection. This chain is Nucleoid-associated protein Spro_1136, found in Serratia proteamaculans (strain 568).